The following is a 59-amino-acid chain: Large ribosomal subunit protein bL32 (59 aa).

Positions 1–20 are disordered; that stretch reads MAVQQNKKSRSRKGMRRSHD. Over residues 7–19 the composition is skewed to basic residues; that stretch reads KKSRSRKGMRRSH.

This sequence belongs to the bacterial ribosomal protein bL32 family.

The polypeptide is Large ribosomal subunit protein bL32 (Nitratidesulfovibrio vulgaris (strain ATCC 29579 / DSM 644 / CCUG 34227 / NCIMB 8303 / VKM B-1760 / Hildenborough) (Desulfovibrio vulgaris)).